Consider the following 142-residue polypeptide: Secreted acidic protein 1B (142 aa).

Acidic residues-rich tracts occupy residues 1–47 and 54–64; these read SDDE…DDNE and TNDDVDYGDGN. Residues 1–74 form a disordered region; it reads SDDESGDDEN…DEAREIGDHS (74 aa). Residues 1 to 123 are Extracellular-facing; that stretch reads SDDESGDDEN…YLRSGGSHFK (123 aa). The segment covering 65 to 74 has biased composition (basic and acidic residues); that stretch reads DEAREIGDHS. The chain crosses the membrane as a helical span at residues 124-141; it reads GQLLNITLGLGFCILFLL. Residue L142 is a topological domain, cytoplasmic.

Component of the acid-insoluble and acid-soluble organic matrix of the aragonitic skeleton (at protein level).

The protein resides in the membrane. This is Secreted acidic protein 1B from Acropora millepora (Staghorn coral).